The chain runs to 122 residues: Biogenesis of lysosome-related organelles complex 1 subunit BLS1 (122 aa).

Ser33 is modified (phosphoserine).

Belongs to the BLOC1S1 family. In terms of assembly, component of the biogenesis of lysosome-related organelles complex-1 (BLOC-1) composed of at least BLI1, BLS1, CNL1, KXD1, SNN1 and VAB2.

It is found in the endosome. Component of the biogenesis of lysosome-related organelles complex-1 (BLOC-1), a complex involved in endosomal cargo sorting. This Saccharomyces cerevisiae (strain YJM789) (Baker's yeast) protein is Biogenesis of lysosome-related organelles complex 1 subunit BLS1 (BLS1).